The following is a 298-amino-acid chain: ATP synthase gamma chain (298 aa).

The protein belongs to the ATPase gamma chain family. F-type ATPases have 2 components, CF(1) - the catalytic core - and CF(0) - the membrane proton channel. CF(1) has five subunits: alpha(3), beta(3), gamma(1), delta(1), epsilon(1). CF(0) has three main subunits: a, b and c.

Its subcellular location is the cell inner membrane. Functionally, produces ATP from ADP in the presence of a proton gradient across the membrane. The gamma chain is believed to be important in regulating ATPase activity and the flow of protons through the CF(0) complex. This Francisella tularensis subsp. holarctica (strain LVS) protein is ATP synthase gamma chain.